The sequence spans 411 residues: Calmodulin-binding receptor-like cytoplasmic kinase 2 (411 aa).

Disordered regions lie at residues 1-44 and 66-99; these read MPSR…DTTT and SNYI…YGNA. Composition is skewed to low complexity over residues 16–44 and 66–95; these read TTSS…DTTT and SNYI…VQRS. Residue Thr-108 is modified to Phosphothreonine. The region spanning 119–398 is the Protein kinase domain; sequence FSPSFRIGQG…MKKCSEILWG (280 aa). ATP-binding positions include 125 to 133 and Lys-147; that span reads IGQGGFGTV. A caM-binding region spans residues 134–159; it reads YKVKLRDGKTFAVKRAKKSMHDDRQG. The active-site Proton acceptor is the Asp-247. 2 positions are modified to phosphoserine: Ser-251 and Ser-283. Phosphothreonine is present on residues Thr-284 and Thr-289. Tyr-297 is subject to Phosphotyrosine.

The protein belongs to the protein kinase superfamily. Ser/Thr protein kinase family. Interacts with calmodulin (CaM) in a Ca(2+)-dependent manner.

Its subcellular location is the cytoplasm. The catalysed reaction is L-seryl-[protein] + ATP = O-phospho-L-seryl-[protein] + ADP + H(+). The enzyme catalyses L-threonyl-[protein] + ATP = O-phospho-L-threonyl-[protein] + ADP + H(+). The polypeptide is Calmodulin-binding receptor-like cytoplasmic kinase 2 (CRCK2) (Arabidopsis thaliana (Mouse-ear cress)).